The sequence spans 167 residues: Putative C-type lectin protein FPV008/FPV253 (167 aa).

Residues 49–152 form the C-type lectin domain; it reads CPDEWIGYNS…SCIFHERTIC (104 aa). 2 disulfide bridges follow: C77–C152 and C131–C144.

The polypeptide is Putative C-type lectin protein FPV008/FPV253 (Vertebrata (FPV)).